We begin with the raw amino-acid sequence, 444 residues long: Cobyrinate a,c-diamide synthase (444 aa).

The region spanning 250-438 (IIAIAQDRAF…PHIHFFGSYK (189 aa)) is the GATase cobBQ-type domain. C332 serves as the catalytic Nucleophile.

It belongs to the CobB/CbiA family. Mg(2+) is required as a cofactor.

The catalysed reaction is cob(II)yrinate + 2 L-glutamine + 2 ATP + 2 H2O = cob(II)yrinate a,c diamide + 2 L-glutamate + 2 ADP + 2 phosphate + 2 H(+). Its pathway is cofactor biosynthesis; adenosylcobalamin biosynthesis; cob(II)yrinate a,c-diamide from sirohydrochlorin (anaerobic route): step 10/10. Catalyzes the ATP-dependent amidation of the two carboxylate groups at positions a and c of cobyrinate, using either L-glutamine or ammonia as the nitrogen source. The polypeptide is Cobyrinate a,c-diamide synthase (Fusobacterium nucleatum subsp. nucleatum (strain ATCC 25586 / DSM 15643 / BCRC 10681 / CIP 101130 / JCM 8532 / KCTC 2640 / LMG 13131 / VPI 4355)).